A 656-amino-acid chain; its full sequence is UvrABC system protein C (656 aa).

Residues 41 to 120 form the GIY-YIG domain; the sequence is KSSGCYLFKD…IKTNKPYFNI (80 aa). Residues 230 to 265 form the UVR domain; it reads DDLEVFLERKMNQYSNDLEFENAAKIRDQISGLKLL.

Belongs to the UvrC family. As to quaternary structure, interacts with UvrB in an incision complex.

The protein resides in the cytoplasm. Functionally, the UvrABC repair system catalyzes the recognition and processing of DNA lesions. UvrC both incises the 5' and 3' sides of the lesion. The N-terminal half is responsible for the 3' incision and the C-terminal half is responsible for the 5' incision. The sequence is that of UvrABC system protein C from Prochlorococcus marinus subsp. pastoris (strain CCMP1986 / NIES-2087 / MED4).